The sequence spans 289 residues: ATP phosphoribosyltransferase (289 aa).

This sequence belongs to the ATP phosphoribosyltransferase family. Long subfamily. Mg(2+) is required as a cofactor.

It localises to the cytoplasm. It carries out the reaction 1-(5-phospho-beta-D-ribosyl)-ATP + diphosphate = 5-phospho-alpha-D-ribose 1-diphosphate + ATP. It participates in amino-acid biosynthesis; L-histidine biosynthesis; L-histidine from 5-phospho-alpha-D-ribose 1-diphosphate: step 1/9. Its activity is regulated as follows. Feedback inhibited by histidine. In terms of biological role, catalyzes the condensation of ATP and 5-phosphoribose 1-diphosphate to form N'-(5'-phosphoribosyl)-ATP (PR-ATP). Has a crucial role in the pathway because the rate of histidine biosynthesis seems to be controlled primarily by regulation of HisG enzymatic activity. This is ATP phosphoribosyltransferase from Pelotomaculum thermopropionicum (strain DSM 13744 / JCM 10971 / SI).